The primary structure comprises 304 residues: Acetaldehyde dehydrogenase (304 aa).

Cysteine 131 functions as the Acyl-thioester intermediate in the catalytic mechanism. Residues 162–170 (SAGPGTRKN) and asparagine 273 each bind NAD(+).

Belongs to the acetaldehyde dehydrogenase family.

The enzyme catalyses acetaldehyde + NAD(+) + CoA = acetyl-CoA + NADH + H(+). This is Acetaldehyde dehydrogenase from Polaromonas naphthalenivorans (strain CJ2).